A 432-amino-acid polypeptide reads, in one-letter code: Adenylosuccinate synthetase (432 aa).

GTP-binding positions include 13-19 and 41-43; these read GDEGKGK and GHT. The active-site Proton acceptor is Asp14. Residues Asp14 and Gly41 each coordinate Mg(2+). Residues 14-17, 39-42, Thr130, Arg144, Gln225, Thr240, and Arg304 contribute to the IMP site; these read DEGK and NAGH. His42 acts as the Proton donor in catalysis. Position 300 to 306 (300 to 306) interacts with substrate; that stretch reads ATTGRRR. GTP contacts are provided by residues Arg306, 332–334, and 415–417; these read KLD and STG.

The protein belongs to the adenylosuccinate synthetase family. Homodimer. Mg(2+) is required as a cofactor.

Its subcellular location is the cytoplasm. It carries out the reaction IMP + L-aspartate + GTP = N(6)-(1,2-dicarboxyethyl)-AMP + GDP + phosphate + 2 H(+). It functions in the pathway purine metabolism; AMP biosynthesis via de novo pathway; AMP from IMP: step 1/2. Functionally, plays an important role in the de novo pathway of purine nucleotide biosynthesis. Catalyzes the first committed step in the biosynthesis of AMP from IMP. The protein is Adenylosuccinate synthetase of Klebsiella pneumoniae (strain 342).